The primary structure comprises 213 residues: Pyridoxine/pyridoxamine 5'-phosphate oxidase (213 aa).

Residues 60–65 (RMVLMK), 75–76 (YS), lysine 82, and glutamine 104 contribute to the FMN site. Lysine 65 contributes to the substrate binding site. 2 residues coordinate substrate: tyrosine 122 and arginine 126. FMN-binding positions include 139 to 140 (QS) and tryptophan 184. A substrate-binding site is contributed by 190-192 (RLH). Arginine 194 contributes to the FMN binding site.

The protein belongs to the pyridoxamine 5'-phosphate oxidase family. As to quaternary structure, homodimer. Requires FMN as cofactor.

It carries out the reaction pyridoxamine 5'-phosphate + O2 + H2O = pyridoxal 5'-phosphate + H2O2 + NH4(+). The catalysed reaction is pyridoxine 5'-phosphate + O2 = pyridoxal 5'-phosphate + H2O2. It participates in cofactor metabolism; pyridoxal 5'-phosphate salvage; pyridoxal 5'-phosphate from pyridoxamine 5'-phosphate: step 1/1. Its pathway is cofactor metabolism; pyridoxal 5'-phosphate salvage; pyridoxal 5'-phosphate from pyridoxine 5'-phosphate: step 1/1. Functionally, catalyzes the oxidation of either pyridoxine 5'-phosphate (PNP) or pyridoxamine 5'-phosphate (PMP) into pyridoxal 5'-phosphate (PLP). In Rhodopseudomonas palustris (strain BisA53), this protein is Pyridoxine/pyridoxamine 5'-phosphate oxidase.